The following is a 448-amino-acid chain: N-succinylarginine dihydrolase (448 aa).

Residues 19 to 28 (GGLSYGNVAS), Asn-110, and 137 to 138 (HR) contribute to the substrate site. Glu-174 is a catalytic residue. Arg-214 provides a ligand contact to substrate. His-250 is a catalytic residue. Substrate is bound by residues Asp-252 and Asn-365. The Nucleophile role is filled by Cys-371.

The protein belongs to the succinylarginine dihydrolase family. As to quaternary structure, homodimer.

It carries out the reaction N(2)-succinyl-L-arginine + 2 H2O + 2 H(+) = N(2)-succinyl-L-ornithine + 2 NH4(+) + CO2. It participates in amino-acid degradation; L-arginine degradation via AST pathway; L-glutamate and succinate from L-arginine: step 2/5. Catalyzes the hydrolysis of N(2)-succinylarginine into N(2)-succinylornithine, ammonia and CO(2). This is N-succinylarginine dihydrolase from Pseudomonas aeruginosa (strain UCBPP-PA14).